Reading from the N-terminus, the 1759-residue chain is Replicase polyprotein (1759 aa).

In terms of domain architecture, DRBM spans 23–90 (DKISTLKMVA…ARQMLLLLSG (68 aa)). Residues 113–140 (YTRLEKAIERRDDKIKTLIKELRRQIKN) adopt a coiled-coil conformation. The 175-residue stretch at 421–595 (AKQLYEYVSC…KEYGIETEKG (175 aa)) folds into the SF3 helicase domain. An ATP-binding site is contributed by 449–456 (GESGVGKT). The Peptidase C3 domain occupies 950–1191 (DAAHNLMIDV…YACPLTQECL (242 aa)). Active-site for picornain 3C-like protease activity residues include His994, Asp1054, and Cys1152. The RdRp catalytic domain maps to 1483–1622 (SHVIAGDFGN…NIDAKVVEWF (140 aa)).

Protein 1A might be expressed through a ribosomal skip from one codon to the next without formation of a peptide bond.

The enzyme catalyses RNA(n) + a ribonucleoside 5'-triphosphate = RNA(n+1) + diphosphate. Its function is as follows. Protein 1A functions as a suppressor of RNA-mediated gene silencing, an antiviral defense mechanism of insect cells. Binds to long dsRNA and to a lesser extent, to siRNA. Functionally, RNA-directed RNA polymerase replicates genomic and antigenomic RNA. The protein is Replicase polyprotein of Drosophila C virus (strain EB) (DCV).